A 309-amino-acid chain; its full sequence is Glutaminase (309 aa).

7 residues coordinate substrate: Ser-65, Asn-117, Glu-162, Asn-169, Tyr-193, Tyr-245, and Val-263.

It belongs to the glutaminase family. In terms of assembly, homotetramer.

It carries out the reaction L-glutamine + H2O = L-glutamate + NH4(+). In Geobacillus thermodenitrificans (strain NG80-2), this protein is Glutaminase.